The following is a 441-amino-acid chain: Ribosomal protein uS12 methylthiotransferase RimO (441 aa).

An MTTase N-terminal domain is found at 8 to 118 (PKIGFVSLGC…VLQHVHHYVP (111 aa)). Residues C17, C53, C82, C150, C154, and C157 each coordinate [4Fe-4S] cluster. A Radical SAM core domain is found at 136 to 373 (LTPRHYAYLK…MQLQQQISAE (238 aa)). The 66-residue stretch at 376-441 (QEKVGREILV…DEYDLWGSRV (66 aa)) folds into the TRAM domain.

This sequence belongs to the methylthiotransferase family. RimO subfamily. The cofactor is [4Fe-4S] cluster.

The protein localises to the cytoplasm. The catalysed reaction is L-aspartate(89)-[ribosomal protein uS12]-hydrogen + (sulfur carrier)-SH + AH2 + 2 S-adenosyl-L-methionine = 3-methylsulfanyl-L-aspartate(89)-[ribosomal protein uS12]-hydrogen + (sulfur carrier)-H + 5'-deoxyadenosine + L-methionine + A + S-adenosyl-L-homocysteine + 2 H(+). Functionally, catalyzes the methylthiolation of an aspartic acid residue of ribosomal protein uS12. This Salmonella agona (strain SL483) protein is Ribosomal protein uS12 methylthiotransferase RimO.